The sequence spans 406 residues: Inactive serine protease 35 (406 aa).

The signal sequence occupies residues 1–17 (MLLWLIIFVSGWTLSLG). Asn-87 carries an N-linked (GlcNAc...) asparagine glycan. Residues 121 to 401 (VYGTDSRFSI…ICLWIHGNAA (281 aa)) form the Peptidase S1 domain. Residues Cys-151 and Cys-167 are joined by a disulfide bond. Residues 186–204 (LKMRNKGGRKKRRGSRRSR) are compositionally biased toward basic residues. Residues 186–248 (LKMRNKGGRK…RPSFQWTRVK (63 aa)) are disordered.

It belongs to the peptidase S1 family.

The protein localises to the secreted. The sequence is that of Inactive serine protease 35 (Prss35) from Rattus norvegicus (Rat).